A 527-amino-acid polypeptide reads, in one-letter code: 2-isopropylmalate synthase (527 aa).

Residues 18–280 (IRIFDTTLRD…QTNINSKRLV (263 aa)) enclose the Pyruvate carboxyltransferase domain. Residues Asp-27, His-215, His-217, and Asn-251 each contribute to the Mn(2+) site. The interval 405-527 (TLVDYEVTSG…ASDPGELPQP (123 aa)) is regulatory domain.

The protein belongs to the alpha-IPM synthase/homocitrate synthase family. LeuA type 1 subfamily. In terms of assembly, homodimer. Mn(2+) is required as a cofactor.

The protein resides in the cytoplasm. It catalyses the reaction 3-methyl-2-oxobutanoate + acetyl-CoA + H2O = (2S)-2-isopropylmalate + CoA + H(+). Its pathway is amino-acid biosynthesis; L-leucine biosynthesis; L-leucine from 3-methyl-2-oxobutanoate: step 1/4. Functionally, catalyzes the condensation of the acetyl group of acetyl-CoA with 3-methyl-2-oxobutanoate (2-ketoisovalerate) to form 3-carboxy-3-hydroxy-4-methylpentanoate (2-isopropylmalate). This chain is 2-isopropylmalate synthase, found in Rhodopirellula baltica (strain DSM 10527 / NCIMB 13988 / SH1).